The following is a 435-amino-acid chain: MNQIRQAPAASASNATESKQEIRNYTMNFGPQHPAAHGVLRLILEMDGETVVRADPHIGLLHRGTEKLAESKPFNQSIGYMDRLDYVSMMCNEHAYVRAIETLIGIQAPERAQYIRTMFDEITRILNHLMWLGSNALDLGAMAVMLYAFREREELMDVYEAISGARMHAAYYRPGGVYRDLPDTMPKYKESRWHKGKALKRLNAAREGSMLDFLEHFTDTFPQRIDEYETLLTDNRIWKQRTVGVGVIEPDVAKAWGMTGVMLRGSGIAWDLRKKQPYAKYDAVDFDIPLGTCGDCYDRYLCRVAEMRESNRIIKQCVQWLKMNPGQVMVENCKVAPPKRESMKDDMEALIHHFKLFSEGYCVPAGETYSAVEAPKGEFGCYLISDGANKPFRVHLRAPGFAHLSSMDAVVRGYMLADVVAMIGTYDLVFGEVDR.

This sequence belongs to the complex I 49 kDa subunit family. In terms of assembly, NDH-1 is composed of 14 different subunits. Subunits NuoB, C, D, E, F, and G constitute the peripheral sector of the complex.

Its subcellular location is the cell inner membrane. The enzyme catalyses a quinone + NADH + 5 H(+)(in) = a quinol + NAD(+) + 4 H(+)(out). NDH-1 shuttles electrons from NADH, via FMN and iron-sulfur (Fe-S) centers, to quinones in the respiratory chain. The immediate electron acceptor for the enzyme in this species is believed to be ubiquinone. Couples the redox reaction to proton translocation (for every two electrons transferred, four hydrogen ions are translocated across the cytoplasmic membrane), and thus conserves the redox energy in a proton gradient. The chain is NADH-quinone oxidoreductase subunit D from Xylella fastidiosa (strain M23).